The sequence spans 373 residues: C-C chemokine receptor type 2 (373 aa).

The Extracellular portion of the chain corresponds to 1-60 (MEDSNMLPQFIHGILSTSHSLFPRSIQELDEGATTPYDYDDGEPCHKTSVKQIGAWILPP). A helical transmembrane segment spans residues 61–81 (LYSLVFIFGFVGNMLVIIILI). The Cytoplasmic portion of the chain corresponds to 82 to 91 (SCKKLKSMTD). A helical membrane pass occupies residues 92–112 (IYLFNLAISDLLFLLTLPFWA). Topologically, residues 113-128 (HYAANEWVFGNIMCKL) are extracellular. Cysteines 126 and 203 form a disulfide. A helical transmembrane segment spans residues 129–149 (FTGLYHIGYFGGIFFIILLTI). The Cytoplasmic segment spans residues 150–170 (DRYLAIVHAVFALKARTVTFG). Tyr152 bears the Phosphotyrosine; by JAK2 mark. A helical transmembrane segment spans residues 171–191 (VITSVVTWVVAVFASLPGIIF). The Extracellular portion of the chain corresponds to 192–220 (TKSEQEDDQHTCGPYFPTIWKNFQTIMRN). Residues 221–241 (ILSLILPLLVMVICYSGILHT) form a helical membrane-spanning segment. Over 242-256 (LFRCRNEKKRHRAVR) the chain is Cytoplasmic. A helical transmembrane segment spans residues 257 to 277 (LIFAIMIVYFLFWTPYNIVLF). Topologically, residues 278–301 (LTTFQEFLGMSNCVVDMHLDQAMQ) are extracellular. The chain crosses the membrane as a helical span at residues 302–322 (VTETLGMTHCCVNPIIYAFVG). At 323–373 (EKFRRYLSIFFRKHIAKNLCKQCPVFYRETADRVSSTFTPSTGEQEVSVGL) the chain is on the cytoplasmic side.

The protein belongs to the G-protein coupled receptor 1 family. As to quaternary structure, interacts with ARRB1. Interacts (via extracellular N-terminal region) with beta-defensin DEFB106A/DEFB106B; this interaction may preferentially require specific tyrosine sulfation on CCR2. Interacts with NUP85; the interaction is required for CCR2 clusters formation on the cell membrane and CCR2 signaling. Post-translationally, N-glycosylated. In terms of processing, sulfation increases the affinity for both monomeric and dimeric CCL2 with stronger binding to the monomeric form. Binding of sulfated CCR2 to CCL2 promotes conversion of CCL2 from dimer to monomer. Expressed in lung, spleen, kidney, thymus and macrophages.

Its subcellular location is the cell membrane. Its function is as follows. Key functional receptor for CCL2 but can also bind CCL7 and CCL12. Its binding with CCL2 on monocytes and macrophages mediates chemotaxis and migration induction through the activation of the PI3K cascade, the small G protein Rac and lamellipodium protrusion. Also acts as a receptor for the beta-defensin DEFB106A/DEFB106B. Regulates the expression of T-cell inflammatory cytokines and T-cell differentiation, promoting the differentiation of T-cells into T-helper 17 cells (Th17) during inflammation. Facilitates the export of mature thymocytes by enhancing directional movement of thymocytes to sphingosine-1-phosphate stimulation and up-regulation of S1P1R expression; signals through the JAK-STAT pathway to regulate FOXO1 activity leading to an increased expression of S1P1R. Plays an important role in mediating peripheral nerve injury-induced neuropathic pain. Increases NMDA-mediated synaptic transmission in both dopamine D1 and D2 receptor-containing neurons, which may be caused by MAPK/ERK-dependent phosphorylation of GRIN2B/NMDAR2B. Mediates the recruitment of macrophages and monocytes to the injury site following brain injury. This chain is C-C chemokine receptor type 2 (Ccr2), found in Rattus norvegicus (Rat).